A 236-amino-acid polypeptide reads, in one-letter code: Orotidine 5'-phosphate decarboxylase (236 aa).

Substrate-binding positions include Asp-17, Lys-39, 66 to 75 (DLKFHDIPNT), Thr-125, Arg-186, Gln-195, Gly-215, and Arg-216. The active-site Proton donor is Lys-68.

Belongs to the OMP decarboxylase family. Type 1 subfamily. As to quaternary structure, homodimer.

It catalyses the reaction orotidine 5'-phosphate + H(+) = UMP + CO2. It participates in pyrimidine metabolism; UMP biosynthesis via de novo pathway; UMP from orotate: step 2/2. Catalyzes the decarboxylation of orotidine 5'-monophosphate (OMP) to uridine 5'-monophosphate (UMP). The chain is Orotidine 5'-phosphate decarboxylase from Buchnera aphidicola subsp. Schizaphis graminum (strain Sg).